A 404-amino-acid chain; its full sequence is S-adenosylmethionine synthase (404 aa).

139–144 (GKGSTD) serves as a coordination point for ATP.

Belongs to the AdoMet synthase 2 family. Mg(2+) serves as cofactor.

The enzyme catalyses L-methionine + ATP + H2O = S-adenosyl-L-methionine + phosphate + diphosphate. It functions in the pathway amino-acid biosynthesis; S-adenosyl-L-methionine biosynthesis; S-adenosyl-L-methionine from L-methionine: step 1/1. In terms of biological role, catalyzes the formation of S-adenosylmethionine from methionine and ATP. This is S-adenosylmethionine synthase from Saccharolobus islandicus (strain L.S.2.15 / Lassen #1) (Sulfolobus islandicus).